The chain runs to 37 residues: Large ribosomal subunit protein bL36A (37 aa).

Belongs to the bacterial ribosomal protein bL36 family.

The sequence is that of Large ribosomal subunit protein bL36A from Arthrobacter sp. (strain FB24).